Consider the following 297-residue polypeptide: Large ribosomal subunit protein uL3 (297 aa).

2 disordered regions span residues 124 to 143 (NQKI…PVRQ) and 258 to 297 (MKEK…DKGE).

It belongs to the universal ribosomal protein uL3 family. Part of the 50S ribosomal subunit. Forms a cluster with proteins L14 and L19.

One of the primary rRNA binding proteins, it binds directly near the 3'-end of the 23S rRNA, where it nucleates assembly of the 50S subunit. The sequence is that of Large ribosomal subunit protein uL3 from Mycoplasma mobile (strain ATCC 43663 / 163K / NCTC 11711) (Mesomycoplasma mobile).